The following is a 110-amino-acid chain: Late cornified envelope protein 1A (110 aa).

Positions 1 to 10 (MSCQQSQQQC) are enriched in low complexity. Disordered stretches follow at residues 1 to 23 (MSCQ…CPPK) and 83 to 110 (QSSG…GGCC). Residues 11 to 23 (QPPPKCTPKCPPK) show a composition bias toward pro residues. Residues 83-95 (QSSGCCSQPSGGS) show a composition bias toward low complexity. Gly residues predominate over residues 96-110 (SCCGGDSGQHSGGCC).

It belongs to the LCE family. In terms of assembly, interacts with CYSRT1. In terms of tissue distribution, skin-specific. Expression was readily detected in adult trunk skin, adult arm skin, fetal skin, penal skin, vulva, esophagus and tongue. Not expressed in the cervix, rectum, lung, colon, or placenta.

Its function is as follows. Precursors of the cornified envelope of the stratum corneum. This chain is Late cornified envelope protein 1A (LCE1A), found in Homo sapiens (Human).